A 156-amino-acid chain; its full sequence is Snaclec A4 (156 aa).

The N-terminal stretch at 1–23 is a signal peptide; sequence MGRSISVSFGLLVVFLSLSGTGA. Cysteine 27 and cysteine 38 are joined by a disulfide. One can recognise a C-type lectin domain in the interval 34 to 155; it reads HEGHCYKVFN…CGQPYRFTCE (122 aa). Residue asparagine 45 is glycosylated (N-linked (GlcNAc...) asparagine). Intrachain disulfides connect cysteine 55–cysteine 154 and cysteine 129–cysteine 146.

Belongs to the snaclec family. As to quaternary structure, heterodimer; disulfide-linked. Expressed by the venom gland.

The protein resides in the secreted. Interferes with one step of hemostasis (modulation of platelet aggregation, or coagulation cascade, for example). The protein is Snaclec A4 of Macrovipera lebetinus (Levantine viper).